We begin with the raw amino-acid sequence, 540 residues long: (13S,14R)-13-O-acetyl-1-hydroxy-N-methylcanadine 8-hydroxylase CYP82X1 (540 aa).

The helical transmembrane segment at 15–35 (FSIILVTTVSIVLLYSVFFWV) threads the bilayer. Heme is bound at residue C483.

Belongs to the cytochrome P450 family. The cofactor is heme. As to expression, highly expressed in capsules. Expressed is stems.

Its subcellular location is the membrane. It carries out the reaction (13S,14R)-13-O-acetyl-1-hydroxy-N-methylcanadine + reduced [NADPH--hemoprotein reductase] + O2 = (13S,14R)-13-O-acetyl-1,8-dihydroxy-N-methylcanadine + oxidized [NADPH--hemoprotein reductase] + H2O + H(+). It functions in the pathway alkaloid biosynthesis. In terms of biological role, cytochrome P450 involved in the biosynthesis of the benzylisoquinoline alkaloid noscapine. Converts (13S,14R)-13-O-acetyl-1-hydroxy-N-methylcanadine to (13S,14R)-13-O-acetyl-1,8-dihydroxy-N-methylcanadine. This chain is (13S,14R)-13-O-acetyl-1-hydroxy-N-methylcanadine 8-hydroxylase CYP82X1, found in Papaver somniferum (Opium poppy).